The primary structure comprises 1033 residues: Probable beta-glucosidase E (1033 aa).

The disordered stretch occupies residues 1 to 71 (MAPPDSTHGG…RSGSYKLRPV (71 aa)). Residues 1-161 (MAPPDSTHGG…PVKYARIWWR (161 aa)) are Cytoplasmic-facing. Basic and acidic residues-rich tracts occupy residues 11 to 20 (SFRDHLKTND) and 59 to 71 (DLER…LRPV). The chain crosses the membrane as a helical; Signal-anchor for type II membrane protein span at residues 162–182 (TLLAVVVTLVVVVWGFLSFAV). The Extracellular segment spans residues 183–1033 (SHREEPTVWP…SRDLPLMGEY (851 aa)). N-linked (GlcNAc...) asparagine glycosylation is found at N224, N232, and N418. D446 is a catalytic residue. N-linked (GlcNAc...) asparagine glycans are attached at residues N489, N528, N593, N909, N918, and N976.

It belongs to the glycosyl hydrolase 3 family.

The protein resides in the cell membrane. It catalyses the reaction Hydrolysis of terminal, non-reducing beta-D-glucosyl residues with release of beta-D-glucose.. Its pathway is glycan metabolism; cellulose degradation. In terms of biological role, beta-glucosidases are one of a number of cellulolytic enzymes involved in the degradation of cellulosic biomass. Catalyzes the last step releasing glucose from the inhibitory cellobiose. The sequence is that of Probable beta-glucosidase E (bglE) from Aspergillus fumigatus (strain CBS 144.89 / FGSC A1163 / CEA10) (Neosartorya fumigata).